We begin with the raw amino-acid sequence, 283 residues long: Accumulation of dyads protein 2 (283 aa).

A disordered region spans residues 1–41; the sequence is MSDKEQTSGNTDLENAPAGYYSSHDNDVNGVAEDERPSHDS. The Cytoplasmic portion of the chain corresponds to 1-89; the sequence is MSDKEQTSGN…APAPVHKFAN (89 aa). The chain crosses the membrane as a helical span at residues 90-110; that stretch reads PAPLGLSAFALTTFVLSMFNA. The Extracellular portion of the chain corresponds to 111–120; the sequence is RAQGITVPNV. A helical transmembrane segment spans residues 121-141; the sequence is VVGCAMFYGGLVQLIAGIWEI. Over 142–151 the chain is Cytoplasmic; the sequence is ALENTFGGTA. Residues 152–172 traverse the membrane as a helical segment; sequence LCSYGGFWLSFAAIYIPWFGI. Residues 173 to 185 lie on the Extracellular side of the membrane; it reads LEAYEDNESDLNN. The chain crosses the membrane as a helical span at residues 186–206; sequence ALGFYLLGWAIFTFGLTVCTM. The Cytoplasmic segment spans residues 207 to 208; sequence KS. Residues 209–229 form a helical membrane-spanning segment; it reads TVMFFLLFFLLALTFLLLSIG. Over 230–240 the chain is Extracellular; that stretch reads HFANRLGVTRA. The helical transmembrane segment at 241–261 threads the bilayer; the sequence is GGVLGVVVAFIAWYNAYAGVA. Topologically, residues 262–283 are cytoplasmic; it reads TKQNSYVLARPFPLPSTERVIF.

This sequence belongs to the acetate uptake transporter (AceTr) (TC 2.A.96) family.

The protein resides in the cell membrane. It localises to the vacuole membrane. Functionally, transporter protein required for ammonia export and acetate uptake and resistance. Necessary for up-regulation and down-regulation of meiotic plaque (MP) component levels in a dependency on external acetate. Has a role in ascus formation. This chain is Accumulation of dyads protein 2 (ADY2), found in Saccharomyces cerevisiae (strain ATCC 204508 / S288c) (Baker's yeast).